A 317-amino-acid chain; its full sequence is Beta-sarcoglycan (317 aa).

Positions 1–31 (MAAAAAATEQQSSNGPVKKSMREKAVERRNV) are disordered. The Cytoplasmic portion of the chain corresponds to 1–64 (MAAAAAATEQ…GLRGRKGNLA (64 aa)). Over residues 20–31 (SMREKAVERRNV) the composition is skewed to basic and acidic residues. The helical; Signal-anchor for type II membrane protein transmembrane segment at 65–85 (ICVIVLLFILAVINLIITLVI) threads the bilayer. Topologically, residues 86 to 317 (WAVIRIGPNG…TSDNPCGDLY (232 aa)) are extracellular. Asn-157, Asn-210, and Asn-257 each carry an N-linked (GlcNAc...) asparagine glycan. 2 disulfides stabilise this stretch: Cys-287-Cys-313 and Cys-289-Cys-306.

This sequence belongs to the sarcoglycan beta/delta/gamma/zeta family. Cross-link to form 2 major subcomplexes: one consisting of SGCB, SGCD and SGCG and the other consisting of SGCB and SGCD. The association between SGCB and SGCG is particularly strong while SGCA is loosely associated with the other sarcoglycans. Post-translationally, disulfide bonds are present.

The protein resides in the cell membrane. It is found in the sarcolemma. Its subcellular location is the cytoplasm. The protein localises to the cytoskeleton. Component of the sarcoglycan complex, a subcomplex of the dystrophin-glycoprotein complex which forms a link between the F-actin cytoskeleton and the extracellular matrix. The chain is Beta-sarcoglycan (SGCB) from Bos taurus (Bovine).